The primary structure comprises 80 residues: uncharacterized protein (80 aa).

This is an uncharacterized protein from Salmonella phage P22 (Bacteriophage P22).